We begin with the raw amino-acid sequence, 1228 residues long: ABC transporter B family member 16 (1228 aa).

The next 6 helical transmembrane spans lie at 22–42, 69–89, 145–167, 171–193, 251–271, and 283–303; these read MGLG…LFFI, LAML…GYCW, LPNI…MLLW, IVGF…ALIG, GIAI…TWYG, and GTVS…GQAL. Residues 22-311 form the ABC transmembrane type-1 1 domain; that stretch reads MGLGLIGAVG…ALSNLKYFSE (290 aa). The ABC transporter 1 domain occupies 346-582; it reads VEFNNVKCKY…DGKYTSLVRL (237 aa). 381–388 is an ATP binding site; sequence GGSGSGKS. N-linked (GlcNAc...) asparagine glycans are attached at residues Asn-529, Asn-593, and Asn-628. The region spanning 658-946 is the ABC transmembrane type-1 2 domain; the sequence is ALCGCLSASL…AGTMTTDLAK (289 aa). The next 2 helical transmembrane spans lie at 667–687 and 700–720; these read LGGA…SVFF and IYVL…ISQQ. N-linked (GlcNAc...) asparagine glycosylation occurs at Asn-755. 2 consecutive transmembrane segments (helical) span residues 781-801 and 805-825; these read LLVQ…VIAW and IVMI…RVLL. Asn-827 is a glycosylation site (N-linked (GlcNAc...) asparagine). Helical transmembrane passes span 881–901 and 920–940; these read SWLA…TSAL and FFEL…AGTM. The 239-residue stretch at 981–1219 folds into the ABC transporter 2 domain; it reads ITFLNVDFAY…GPTGSYFSLV (239 aa). N-linked (GlcNAc...) asparagine glycosylation is present at Asn-1001. 1016–1023 serves as a coordination point for ATP; sequence GPSRSGKS.

The protein belongs to the ABC transporter superfamily. ABCB family. Multidrug resistance exporter (TC 3.A.1.201) subfamily.

The protein localises to the membrane. This is ABC transporter B family member 16 (ABCB16) from Arabidopsis thaliana (Mouse-ear cress).